We begin with the raw amino-acid sequence, 102 residues long: Large ribosomal subunit protein uL24 (102 aa).

Belongs to the universal ribosomal protein uL24 family. As to quaternary structure, part of the 50S ribosomal subunit.

One of two assembly initiator proteins, it binds directly to the 5'-end of the 23S rRNA, where it nucleates assembly of the 50S subunit. In terms of biological role, one of the proteins that surrounds the polypeptide exit tunnel on the outside of the subunit. The protein is Large ribosomal subunit protein uL24 of Alkaliphilus oremlandii (strain OhILAs) (Clostridium oremlandii (strain OhILAs)).